The chain runs to 312 residues: Acetyl-coenzyme A carboxylase carboxyl transferase subunit alpha (312 aa).

One can recognise a CoA carboxyltransferase C-terminal domain in the interval 36 to 286 (RLDKEVKSIY…KEYFLDALRT (251 aa)).

Belongs to the AccA family. Acetyl-CoA carboxylase is a heterohexamer composed of biotin carboxyl carrier protein (AccB), biotin carboxylase (AccC) and two subunits each of ACCase subunit alpha (AccA) and ACCase subunit beta (AccD).

The protein resides in the cytoplasm. It catalyses the reaction N(6)-carboxybiotinyl-L-lysyl-[protein] + acetyl-CoA = N(6)-biotinyl-L-lysyl-[protein] + malonyl-CoA. The protein operates within lipid metabolism; malonyl-CoA biosynthesis; malonyl-CoA from acetyl-CoA: step 1/1. Its function is as follows. Component of the acetyl coenzyme A carboxylase (ACC) complex. First, biotin carboxylase catalyzes the carboxylation of biotin on its carrier protein (BCCP) and then the CO(2) group is transferred by the carboxyltransferase to acetyl-CoA to form malonyl-CoA. The polypeptide is Acetyl-coenzyme A carboxylase carboxyl transferase subunit alpha (Helicobacter pylori (strain HPAG1)).